A 313-amino-acid chain; its full sequence is Probable GTP 3',8-cyclase (313 aa).

The Radical SAM core domain maps to 4–224; the sequence is VYGRELEDLR…EIRNKHKRPR (221 aa). A GTP-binding site is contributed by arginine 13. The [4Fe-4S] cluster site is built by cysteine 20, cysteine 24, and cysteine 27. GTP is bound at residue lysine 60. Glycine 64 contributes to the S-adenosyl-L-methionine binding site. Position 90 (threonine 90) interacts with GTP. Serine 114 lines the S-adenosyl-L-methionine pocket. A GTP-binding site is contributed by lysine 151. [4Fe-4S] cluster contacts are provided by cysteine 244 and cysteine 247. Position 249 to 251 (249 to 251) interacts with GTP; it reads RIR. Cysteine 261 contacts [4Fe-4S] cluster.

Belongs to the radical SAM superfamily. MoaA family. [4Fe-4S] cluster serves as cofactor.

It catalyses the reaction GTP + AH2 + S-adenosyl-L-methionine = (8S)-3',8-cyclo-7,8-dihydroguanosine 5'-triphosphate + 5'-deoxyadenosine + L-methionine + A + H(+). The protein operates within cofactor biosynthesis; molybdopterin biosynthesis. Its function is as follows. Catalyzes the cyclization of GTP to (8S)-3',8-cyclo-7,8-dihydroguanosine 5'-triphosphate. In Sulfolobus acidocaldarius (strain ATCC 33909 / DSM 639 / JCM 8929 / NBRC 15157 / NCIMB 11770), this protein is Probable GTP 3',8-cyclase.